The following is a 131-amino-acid chain: Increased copper sensitivity protein 3 (131 aa).

2 consecutive transmembrane segments (helical) span residues 35–55 (ISVL…IFFS) and 74–94 (IALT…IIAF).

The protein resides in the membrane. The chain is Increased copper sensitivity protein 3 (ICS3) from Saccharomyces cerevisiae (strain ATCC 204508 / S288c) (Baker's yeast).